The following is a 212-amino-acid chain: HTH-type transcriptional repressor NicS (212 aa).

In terms of domain architecture, HTH tetR-type spans 14 to 74 (DRTRDNILKA…SVLEHIYASF (61 aa)). Residues 37–56 (RIEQISTLAKSNDRMIYYYF) constitute a DNA-binding region (H-T-H motif).

It functions in the pathway cofactor degradation; nicotinate degradation [regulation]. Its function is as follows. Transcriptional repressor for the nicAB operon, encoding the upper aerobic nicotinate degradation pathway. Acts under non-induced conditions: repression of the nicAB operon becomes alleviated in presence of either nicotinate or 6-hydroxynicotinate (6HNA). This chain is HTH-type transcriptional repressor NicS (nicS), found in Pseudomonas putida (strain ATCC 47054 / DSM 6125 / CFBP 8728 / NCIMB 11950 / KT2440).